Reading from the N-terminus, the 421-residue chain is 3-isopropylmalate dehydratase large subunit (421 aa).

[4Fe-4S] cluster contacts are provided by C302, C362, and C365.

It belongs to the aconitase/IPM isomerase family. LeuC type 2 subfamily. Heterodimer of LeuC and LeuD. The cofactor is [4Fe-4S] cluster.

The catalysed reaction is (2R,3S)-3-isopropylmalate = (2S)-2-isopropylmalate. The protein operates within amino-acid biosynthesis; L-leucine biosynthesis; L-leucine from 3-methyl-2-oxobutanoate: step 2/4. In terms of biological role, catalyzes the isomerization between 2-isopropylmalate and 3-isopropylmalate, via the formation of 2-isopropylmaleate. The chain is 3-isopropylmalate dehydratase large subunit from Campylobacter concisus (strain 13826).